The chain runs to 63 residues: Beta-toxin NaTx36 (63 aa).

The LCN-type CS-alpha/beta domain occupies 1-62 (KDGYPMRSDG…VYDSATSKCR (62 aa)). Disulfide bonds link cysteine 11-cysteine 61, cysteine 15-cysteine 36, cysteine 22-cysteine 43, and cysteine 26-cysteine 45.

The protein belongs to the long (4 C-C) scorpion toxin superfamily. Sodium channel inhibitor family. Beta subfamily. As to expression, expressed by the venom gland.

It localises to the secreted. Its function is as follows. Beta toxins bind sodium channels (Nav) and shift the voltage of activation towards more negative potentials thereby affecting sodium channel activation and promoting spontaneous and repetitive firing. Only when tested on grasshopper mouse channels, this toxin inhibits Nav1.8/SCN10A sodium currents in a concentration and voltage-dependent manner (IC(50)=680 nM). This toxin hyperpolarizes the voltage dependence of Nav1.8/SCN10A activation, as well as steady-state fast inactivation and slow inactivation. In contrast to most beta scorpion toxins, this toxin inhibits grasshopper mouse Nav1.8/SCN10A currents through modulation of the domain I S4 voltage sensor, and the domain II second S5-S6 extracellular pore loop. This is Beta-toxin NaTx36 from Centruroides sculpturatus (Arizona bark scorpion).